Here is a 315-residue protein sequence, read N- to C-terminus: MAFLQDGNHTAVTEFILLGLTDDPVLRVVLFTIILCIYLVTVFGNLSTILLIRVSSQLHHPMYFFLSHLASVDIGISSSVTPSMLVNFLLERSTISYLGCGIQLGSADFIASVECFLLAAMAYDRFMAVCNPLLYSTKMSTQVCVQLVVGSYIGGFLNASLIVTVYFFSFLFCGPNRIDHFFCDFAPLAELSCSDVSVSVLIISFSAGSVTMITVFVIVISYSYILITILKMHSTEGRHKAFSTCTSHLTAVTLYYGTITFIYVMPKSSFSTDQNKVVSVFYMVMIPMLNPLIYSLSNNEIKGALKRQLGMKTLS.

Residues 1–28 (MAFLQDGNHTAVTEFILLGLTDDPVLRV) lie on the Extracellular side of the membrane. Asparagine 8 carries N-linked (GlcNAc...) asparagine glycosylation. The chain crosses the membrane as a helical span at residues 29–49 (VLFTIILCIYLVTVFGNLSTI). Topologically, residues 50-57 (LLIRVSSQ) are cytoplasmic. Residues 58–78 (LHHPMYFFLSHLASVDIGISS) traverse the membrane as a helical segment. Residues 79–102 (SVTPSMLVNFLLERSTISYLGCGI) lie on the Extracellular side of the membrane. Cysteine 100 and cysteine 193 are joined by a disulfide. A helical transmembrane segment spans residues 103 to 123 (QLGSADFIASVECFLLAAMAY). Over 124–136 (DRFMAVCNPLLYS) the chain is Cytoplasmic. A helical membrane pass occupies residues 137–157 (TKMSTQVCVQLVVGSYIGGFL). The Extracellular portion of the chain corresponds to 158–200 (NASLIVTVYFFSFLFCGPNRIDHFFCDFAPLAELSCSDVSVSV). The helical transmembrane segment at 201–221 (LIISFSAGSVTMITVFVIVIS) threads the bilayer. Over 222–241 (YSYILITILKMHSTEGRHKA) the chain is Cytoplasmic. Residues 242-262 (FSTCTSHLTAVTLYYGTITFI) traverse the membrane as a helical segment. The Extracellular segment spans residues 263–275 (YVMPKSSFSTDQN). A helical transmembrane segment spans residues 276–296 (KVVSVFYMVMIPMLNPLIYSL). The Cytoplasmic portion of the chain corresponds to 297–315 (SNNEIKGALKRQLGMKTLS).

The protein belongs to the G-protein coupled receptor 1 family.

It is found in the cell membrane. Functionally, potential odorant receptor. This chain is Olfactory receptor 5P59, found in Mus musculus (Mouse).